A 122-amino-acid chain; its full sequence is Small ribosomal subunit protein uS13 (122 aa).

The interval 93–122 is disordered; the sequence is RRGLPVRGQRTKTNARTRKGPKKTIAGKKK.

Belongs to the universal ribosomal protein uS13 family. As to quaternary structure, part of the 30S ribosomal subunit. Forms a loose heterodimer with protein S19. Forms two bridges to the 50S subunit in the 70S ribosome.

Its function is as follows. Located at the top of the head of the 30S subunit, it contacts several helices of the 16S rRNA. In the 70S ribosome it contacts the 23S rRNA (bridge B1a) and protein L5 of the 50S subunit (bridge B1b), connecting the 2 subunits; these bridges are implicated in subunit movement. Contacts the tRNAs in the A and P-sites. The polypeptide is Small ribosomal subunit protein uS13 (Corynebacterium jeikeium (strain K411)).